The sequence spans 206 residues: Ras-related protein Ral-B (206 aa).

21–29 (GSGGVGKSA) lines the GTP pocket. Positions 43 to 51 (YEPTKADSY) match the Effector region motif. GTP-binding positions include 68-72 (DTAGQ), 128-131 (NKSD), and 158-160 (SAK). Positions 180–189 (KMSENKDKNG) are enriched in basic and acidic residues. The tract at residues 180-206 (KMSENKDKNGKKSSKNKKSFKERCCLL) is disordered. Cys-203 is modified (cysteine methyl ester). Cys-203 is lipidated: S-geranylgeranyl cysteine. Residues 204 to 206 (CLL) constitute a propeptide, removed in mature form.

This sequence belongs to the small GTPase superfamily. Ras family. Interacts with EXOC2/Sec5 and EXOC8/Exo84. Interacts (via effector domain) with RALBP1. Prenylation is essential for membrane localization. Post-translationally, the farnesylated form confers resistance to the proapoptotic and anti-anchorage-dependent growth effects of some geranylgeranyltransferase I inhibitors.

It localises to the cell membrane. It is found in the midbody. The enzyme catalyses GTP + H2O = GDP + phosphate + H(+). Its activity is regulated as follows. Alternates between an inactive form bound to GDP and an active form bound to GTP. Activated by a guanine nucleotide-exchange factor (GEF) and inactivated by a GTPase-activating protein (GAP). Its function is as follows. Multifunctional GTPase involved in a variety of cellular processes including gene expression, cell migration, cell proliferation, oncogenic transformation and membrane trafficking. Accomplishes its multiple functions by interacting with distinct downstream effectors. Acts as a GTP sensor for GTP-dependent exocytosis of dense core vesicles. Required both to stabilize the assembly of the exocyst complex and to localize functional exocyst complexes to the leading edge of migrating cells. Required for suppression of apoptosis. In late stages of cytokinesis, upon completion of the bridge formation between dividing cells, mediates exocyst recruitment to the midbody to drive abscission. Involved in ligand-dependent receptor mediated endocytosis of the EGF and insulin receptors. This is Ras-related protein Ral-B (RALB) from Pongo abelii (Sumatran orangutan).